A 229-amino-acid polypeptide reads, in one-letter code: 2-phytyl-1,4-naphtoquinone methyltransferase (229 aa).

It belongs to the class I-like SAM-binding methyltransferase superfamily. MenG/UbiE family.

The enzyme catalyses demethylphylloquinol + S-adenosyl-L-methionine = phylloquinol + S-adenosyl-L-homocysteine + H(+). It functions in the pathway cofactor biosynthesis; phylloquinone biosynthesis. Methyltransferase required for the conversion of 2-phytyl-1,4-beta-naphthoquinol to phylloquinol. The chain is 2-phytyl-1,4-naphtoquinone methyltransferase from Nostoc sp. (strain PCC 7120 / SAG 25.82 / UTEX 2576).